A 303-amino-acid chain; its full sequence is Cytidine deaminase (303 aa).

CMP/dCMP-type deaminase domains lie at 57–172 and 196–303; these read TDKE…YLPD and ITED…IQVS. Position 98–100 (98–100) interacts with substrate; that stretch reads NQE. His111 lines the Zn(2+) pocket. Residue Glu113 is the Proton donor of the active site. Zn(2+) is bound by residues Cys138 and Cys141.

Belongs to the cytidine and deoxycytidylate deaminase family. Homodimer. Zn(2+) is required as a cofactor.

The enzyme catalyses cytidine + H2O + H(+) = uridine + NH4(+). It catalyses the reaction 2'-deoxycytidine + H2O + H(+) = 2'-deoxyuridine + NH4(+). Functionally, this enzyme scavenges exogenous and endogenous cytidine and 2'-deoxycytidine for UMP synthesis. The polypeptide is Cytidine deaminase (Histophilus somni (strain 2336) (Haemophilus somnus)).